Here is a 389-residue protein sequence, read N- to C-terminus: Trans-2-enoyl-CoA reductase [NADH] (389 aa).

NAD(+) is bound by residues 47–52 (GASTGY), 73–74 (FE), 110–111 (DA), and 138–139 (LA). Y224 contributes to the substrate binding site. Y234 functions as the Proton donor in the catalytic mechanism. NAD(+) is bound by residues K243 and 272-274 (LVT).

It belongs to the TER reductase family. In terms of assembly, monomer.

It carries out the reaction a 2,3-saturated acyl-CoA + NAD(+) = a (2E)-enoyl-CoA + NADH + H(+). It functions in the pathway lipid metabolism; fatty acid biosynthesis. In terms of biological role, involved in the fatty acid synthesis (FAS II). Catalyzes the reduction of a carbon-carbon double bond in an enoyl moiety that is covalently linked to a coenzyme A (CoA). This chain is Trans-2-enoyl-CoA reductase [NADH], found in Clostridium perfringens (strain ATCC 13124 / DSM 756 / JCM 1290 / NCIMB 6125 / NCTC 8237 / Type A).